The chain runs to 111 residues: MICOS complex subunit MIC13 (111 aa).

The helical transmembrane segment at 8 to 26 (VVKFATKVTIAGGALYVAY) threads the bilayer.

It belongs to the MICOS complex subunit Mic13 family. As to quaternary structure, component of the mitochondrial contact site and cristae organizing system (MICOS) complex.

The protein resides in the mitochondrion inner membrane. Component of the MICOS complex, a large protein complex of the mitochondrial inner membrane that plays crucial roles in the maintenance of crista junctions, inner membrane architecture, and formation of contact sites to the outer membrane. Constituent of mature MICOS complex, it is required for the formation of cristae junction (CJ) and maintenance of cristae morphology. Required for the incorporation of MIC10 into the MICOS complex. The polypeptide is MICOS complex subunit MIC13 (Danio rerio (Zebrafish)).